The primary structure comprises 560 residues: Protein SINE1 (560 aa).

G2 is subject to N-acetylglycine. Positions 7 to 287 (PILRQELANL…VRGAAYEAMM (281 aa)) are ARMADILLO-type fold. The KASH domain maps to 517–560 (KKKKKKMSYAKLVIAISFVVVALFATVILMVNQDDDVGYYTVPT). A helical transmembrane segment spans residues 528 to 548 (LVIAISFVVVALFATVILMVN). A Required for nuclear localization motif is present at residues 557-560 (TVPT).

As to quaternary structure, interacts with SUN1 and SUN2. Binds to F-actin. Preferentially expressed in guards cells, but also detected in root cells.

It is found in the nucleus membrane. Its function is as follows. Plays a role in nucleus positioning in guard cells. This chain is Protein SINE1, found in Arabidopsis thaliana (Mouse-ear cress).